A 224-amino-acid polypeptide reads, in one-letter code: Ribose-5-phosphate isomerase A (224 aa).

Residues 34-37 (TGST), 87-90 (DGAD), and 100-103 (KGGG) each bind substrate. The active-site Proton acceptor is Glu109. Lys127 provides a ligand contact to substrate.

This sequence belongs to the ribose 5-phosphate isomerase family. Homodimer.

It catalyses the reaction aldehydo-D-ribose 5-phosphate = D-ribulose 5-phosphate. It functions in the pathway carbohydrate degradation; pentose phosphate pathway; D-ribose 5-phosphate from D-ribulose 5-phosphate (non-oxidative stage): step 1/1. Catalyzes the reversible conversion of ribose-5-phosphate to ribulose 5-phosphate. The polypeptide is Ribose-5-phosphate isomerase A (Francisella tularensis subsp. novicida (strain U112)).